A 519-amino-acid chain; its full sequence is Sensor protein RprX (519 aa).

The next 2 membrane-spanning stretches (helical) occupy residues 5 to 25 (TIWILGIIMGLSFLSLLYLQV) and 260 to 280 (IPSMIFTIVLLITFIFTIYIV). Positions 296–517 (NMTHEFKTPI…KFIIALPLLK (222 aa)) constitute a Histidine kinase domain. The residue at position 299 (H299) is a Phosphohistidine; by autocatalysis.

It localises to the cell membrane. The catalysed reaction is ATP + protein L-histidine = ADP + protein N-phospho-L-histidine.. In terms of biological role, member of the two-component regulatory system RprX/RprY. May activate RprY by phosphorylation. The protein is Sensor protein RprX (rprX) of Bacteroides fragilis (strain YCH46).